Reading from the N-terminus, the 396-residue chain is 1-deoxy-D-xylulose 5-phosphate reductoisomerase (396 aa).

Positions 10, 11, 12, 13, 36, 37, 38, and 124 each coordinate NADPH. Lysine 125 provides a ligand contact to 1-deoxy-D-xylulose 5-phosphate. NADPH is bound at residue glutamate 126. Aspartate 150 contacts Mn(2+). 1-deoxy-D-xylulose 5-phosphate-binding residues include serine 151, glutamate 152, serine 186, and histidine 209. Glutamate 152 is a binding site for Mn(2+). Glycine 215 is an NADPH binding site. Positions 222, 227, 228, and 231 each coordinate 1-deoxy-D-xylulose 5-phosphate. Glutamate 231 provides a ligand contact to Mn(2+).

Belongs to the DXR family. Requires Mg(2+) as cofactor. It depends on Mn(2+) as a cofactor.

The catalysed reaction is 2-C-methyl-D-erythritol 4-phosphate + NADP(+) = 1-deoxy-D-xylulose 5-phosphate + NADPH + H(+). It participates in isoprenoid biosynthesis; isopentenyl diphosphate biosynthesis via DXP pathway; isopentenyl diphosphate from 1-deoxy-D-xylulose 5-phosphate: step 1/6. In terms of biological role, catalyzes the NADPH-dependent rearrangement and reduction of 1-deoxy-D-xylulose-5-phosphate (DXP) to 2-C-methyl-D-erythritol 4-phosphate (MEP). This Glaesserella parasuis serovar 5 (strain SH0165) (Haemophilus parasuis) protein is 1-deoxy-D-xylulose 5-phosphate reductoisomerase.